We begin with the raw amino-acid sequence, 514 residues long: Probable type III restriction-modification enzyme HindVIP Res subunit (514 aa).

This sequence belongs to the type III restriction-modification system Res protein family. As to quaternary structure, contains two different subunits: Res and Mod. Mg(2+) is required as a cofactor. S-adenosyl-L-methionine serves as cofactor.

The catalysed reaction is Endonucleolytic cleavage of DNA to give specific double-stranded fragments with terminal 5'-phosphates.. Functionally, a type III restriction enzyme that recognizes 2 inversely oriented double-stranded sequences 5'-CGAAT-3' and cleaves 25-27 base pairs downstream. After binding to one recognition site undergoes random one-dimensional diffusion along DNA until it collides with a stationary enzyme bound to the second DNA site, which is when DNA cleavage occurs. DNA restriction requires both the Res and Mod subunits. The chain is Probable type III restriction-modification enzyme HindVIP Res subunit from Haemophilus influenzae (strain ATCC 51907 / DSM 11121 / KW20 / Rd).